Consider the following 631-residue polypeptide: Cyclic nucleotide-gated channel alpha-3 (631 aa).

The span at 1 to 18 (MAKVNTQCSQPSPTQLSI) shows a compositional bias: polar residues. 2 disordered regions span residues 1–21 (MAKV…IKNA) and 71–98 (EVST…RKEE). Over 1–111 (MAKVNTQCSQ…VDPSSNIYYR (111 aa)) the chain is Cytoplasmic. Positions 87–98 (KPPDGGEGRKEE) are enriched in basic and acidic residues. Residues 112-133 (WLTAIALPVFYNWCLLVCRACF) traverse the membrane as a helical segment. The Extracellular portion of the chain corresponds to 134-139 (DELQSE). A helical membrane pass occupies residues 140 to 160 (HLTLWLVLDYSADVLYVLDML). The Cytoplasmic segment spans residues 161-187 (VRARTGFLEQGLMVRDTKRLWKHYTKT). Residues 188–207 (LHFKLDILSLIPTDLAYLKL) form a helical membrane-spanning segment. Over 208–211 (GVNY) the chain is Extracellular. The helical transmembrane segment at 212 to 229 (PELRFNRLLKFSRLFEFF) threads the bilayer. Topologically, residues 230-239 (DRTETRTNYP) are cytoplasmic. Positions 239–347 (PNVFRIGNLV…GNVGSMISNM (109 aa)) are ion conduction pathway. The chain crosses the membrane as a helical span at residues 240–262 (NVFRIGNLVLYTLIIIHWNACIY). Topologically, residues 263-288 (FAISKFIGFGTDSWVYPNTSKPEYAR) are extracellular. N-linked (GalNAc...) asparagine glycosylation is present at asparagine 280. The next 2 membrane-spanning stretches (helical) occupy residues 289 to 319 (LSRK…DEEY) and 320 to 344 (LFVV…GSMI). The interval 306 to 309 (TIGE) is selectivity filter. At 345–631 (SNMNAPRVEF…ENSEDASKTD (287 aa)) the chain is on the cytoplasmic side. The segment at 349 to 426 (APRVEFQAKI…TLKKVRIFQD (78 aa)) is C-linker. Positions 429–549 (AGLLVELVLK…EEKGRQILMK (121 aa)) are cyclic nucleotide-binding domain. Positions 489, 490, 492, 505, 506, and 550 each coordinate 3',5'-cyclic GMP. Residues 567–610 (VEEKVEYLESSLDILQTRFARLLAEYSASQMKLKQRLTRLESQM) are a coiled coil.

This sequence belongs to the cyclic nucleotide-gated cation channel (TC 1.A.1.5) family. CNGA3 subfamily. Forms heterotetrameric channels composed of CNGA3 and CNGB3 subunits with 3:1 stoichiometry. Prominently expressed in retina.

It localises to the cell membrane. The catalysed reaction is Ca(2+)(in) = Ca(2+)(out). The enzyme catalyses Na(+)(in) = Na(+)(out). It catalyses the reaction K(+)(in) = K(+)(out). It carries out the reaction NH4(+)(in) = NH4(+)(out). The catalysed reaction is Rb(+)(in) = Rb(+)(out). The enzyme catalyses Li(+)(in) = Li(+)(out). It catalyses the reaction Cs(+)(in) = Cs(+)(out). Its function is as follows. Pore-forming subunit of the cone cyclic nucleotide-gated channel. Mediates cone photoresponses at bright light converting transient changes in intracellular cGMP levels into electrical signals. In the dark, cGMP levels are high and keep the channel open enabling a steady inward current carried by Na(+) and Ca(2+) ions that leads to membrane depolarization and neurotransmitter release from synaptic terminals. Upon photon absorption cGMP levels decline leading to channel closure and membrane hyperpolarization that ultimately slows neurotransmitter release and signals the presence of light, the end point of the phototransduction cascade. Pore-forming subunit of the gustatory cyclic nucleotide-gated channel. In the taste buds, may sense oral extracellular pH and conduct ion currents that modulate the excitability of taste cells. Conducts cGMP- and cAMP-gated ion currents, with permeability for monovalent and divalent cations. This is Cyclic nucleotide-gated channel alpha-3 from Mus musculus (Mouse).